Here is a 292-residue protein sequence, read N- to C-terminus: 4-hydroxy-tetrahydrodipicolinate synthase (292 aa).

Threonine 45 serves as a coordination point for pyruvate. Catalysis depends on tyrosine 133, which acts as the Proton donor/acceptor. Residue lysine 161 is the Schiff-base intermediate with substrate of the active site. Residue isoleucine 203 participates in pyruvate binding.

This sequence belongs to the DapA family. As to quaternary structure, homotetramer; dimer of dimers.

The protein localises to the cytoplasm. It catalyses the reaction L-aspartate 4-semialdehyde + pyruvate = (2S,4S)-4-hydroxy-2,3,4,5-tetrahydrodipicolinate + H2O + H(+). It functions in the pathway amino-acid biosynthesis; L-lysine biosynthesis via DAP pathway; (S)-tetrahydrodipicolinate from L-aspartate: step 3/4. Catalyzes the condensation of (S)-aspartate-beta-semialdehyde [(S)-ASA] and pyruvate to 4-hydroxy-tetrahydrodipicolinate (HTPA). This chain is 4-hydroxy-tetrahydrodipicolinate synthase, found in Nitrosococcus oceani (strain ATCC 19707 / BCRC 17464 / JCM 30415 / NCIMB 11848 / C-107).